Consider the following 493-residue polypeptide: Leucine-rich repeat-containing protein 14 (493 aa).

The LRR 1; degenerate repeat unit spans residues lysine 111–threonine 146. The stretch at arginine 194–aspartate 218 is one LRR 2; degenerate repeat. Residues alanine 219–arginine 246 form an LRR 3; degenerate repeat. Residues phenylalanine 247 to arginine 282 form an LRR 4; degenerate repeat. LRR repeat units follow at residues phenylalanine 283–leucine 307, glutamine 308–lysine 339, lysine 340–leucine 360, alanine 364–arginine 391, and cysteine 392–aspartate 416.

It belongs to the PRAME family. LRRC14 subfamily. As to quaternary structure, interacts with IKBKB; disrupts IKBKB-IKBKG interaction preventing I-kappa-B-kinase (IKK) core complex formation and leading to a decrease of IKBKB phosphorylation and NF-kappaB activation. Interacts with CHUK.

The protein localises to the cytoplasm. In terms of biological role, negatively regulates Toll-like receptor-mediated NF-kappa-B signaling by disrupting IKK core complex formation through interaction with IKBKB. This chain is Leucine-rich repeat-containing protein 14, found in Mus musculus (Mouse).